The primary structure comprises 141 residues: Hemoglobin subunit alpha-D (141 aa).

The region spanning 1-141 is the Globin domain; the sequence is VLTAEDRRLL…VADVLCEKYR (141 aa). Positions 58 and 87 each coordinate heme b.

This sequence belongs to the globin family. In terms of assembly, heterotetramer of two alpha chains and two beta chains. As to expression, red blood cells.

Involved in oxygen transport from the lung to the various peripheral tissues. This chain is Hemoglobin subunit alpha-D, found in Drymarchon melanurus erebennus (Texas indigo snake).